The following is a 427-amino-acid chain: N-formyl-4-amino-5-aminomethyl-2-methylpyrimidine deformylase (427 aa).

H91 is a Zn(2+) binding site. Residue D93 is part of the active site. D124 contacts Zn(2+). The Proton acceptor role is filled by E158. E159, D182, and H396 together coordinate Zn(2+).

Belongs to the peptidase M20A family. Zn(2+) serves as cofactor. Requires Co(2+) as cofactor.

It catalyses the reaction N-formyl-4-amino-5-aminomethyl-2-methylpyrimidine + H2O = 4-amino-5-aminomethyl-2-methylpyrimidine + formate. The protein operates within cofactor biosynthesis; thiamine diphosphate biosynthesis. Functionally, catalyzes the deformylation of the formylaminopyrimidine N-formyl-4-amino-5-aminomethyl-2-methylpyrimidine (FAMP) to give the corresponding aminopyrimidine. The sequence is that of N-formyl-4-amino-5-aminomethyl-2-methylpyrimidine deformylase from Halalkalibacterium halodurans (strain ATCC BAA-125 / DSM 18197 / FERM 7344 / JCM 9153 / C-125) (Bacillus halodurans).